The sequence spans 206 residues: 2,3-bisphosphoglycerate-dependent phosphoglycerate mutase (206 aa).

Residues arginine 9–asparagine 16, threonine 22–glycine 23, arginine 61, glutamate 88–tyrosine 91, lysine 99, arginine 115–arginine 116, and glycine 159–asparagine 160 contribute to the substrate site. The active-site Tele-phosphohistidine intermediate is histidine 10. The Proton donor/acceptor role is filled by glutamate 88.

This sequence belongs to the phosphoglycerate mutase family. BPG-dependent PGAM subfamily. As to quaternary structure, homodimer.

The catalysed reaction is (2R)-2-phosphoglycerate = (2R)-3-phosphoglycerate. Its pathway is carbohydrate degradation; glycolysis; pyruvate from D-glyceraldehyde 3-phosphate: step 3/5. Catalyzes the interconversion of 2-phosphoglycerate and 3-phosphoglycerate. The sequence is that of 2,3-bisphosphoglycerate-dependent phosphoglycerate mutase from Brucella ovis (strain ATCC 25840 / 63/290 / NCTC 10512).